Here is a 211-residue protein sequence, read N- to C-terminus: Glycerol-3-phosphate acyltransferase (211 aa).

The next 5 membrane-spanning stretches (helical) occupy residues 5–25 (VILG…TGYL), 55–75 (GPGL…ILVA), 85–105 (PVPA…AVLA), 126–146 (VLLA…LVVL), and 168–188 (WFFT…AFVI).

The protein belongs to the PlsY family. In terms of assembly, probably interacts with PlsX.

It localises to the cell inner membrane. It catalyses the reaction an acyl phosphate + sn-glycerol 3-phosphate = a 1-acyl-sn-glycero-3-phosphate + phosphate. Its pathway is lipid metabolism; phospholipid metabolism. In terms of biological role, catalyzes the transfer of an acyl group from acyl-phosphate (acyl-PO(4)) to glycerol-3-phosphate (G3P) to form lysophosphatidic acid (LPA). This enzyme utilizes acyl-phosphate as fatty acyl donor, but not acyl-CoA or acyl-ACP. The protein is Glycerol-3-phosphate acyltransferase of Thermosynechococcus vestitus (strain NIES-2133 / IAM M-273 / BP-1).